Consider the following 184-residue polypeptide: Cytochrome c homolog (184 aa).

At 1 to 10 (MDSFELNKIL) the chain is on the cytoplasmic side. A helical; Signal-anchor transmembrane segment spans residues 11–31 (GAVLGTCLILLVTSFTANALF). Residues 32-184 (SPKMPEKPGF…HPKPLPTASK (153 aa)) lie on the Periplasmic side of the membrane. The heme c site is built by Cys84, Cys87, His88, and Met151.

The protein belongs to the cytochrome c family. In terms of processing, binds 1 heme c group covalently per subunit.

The protein localises to the cell membrane. Functionally, may be involved in electron transfer from bc1 complex to aa3. The chain is Cytochrome c homolog (cycM) from Bradyrhizobium diazoefficiens (strain JCM 10833 / BCRC 13528 / IAM 13628 / NBRC 14792 / USDA 110).